A 287-amino-acid chain; its full sequence is ATP synthase gamma chain (287 aa).

Belongs to the ATPase gamma chain family. In terms of assembly, F-type ATPases have 2 components, CF(1) - the catalytic core - and CF(0) - the membrane proton channel. CF(1) has five subunits: alpha(3), beta(3), gamma(1), delta(1), epsilon(1). CF(0) has three main subunits: a, b and c.

The protein resides in the cell inner membrane. Its function is as follows. Produces ATP from ADP in the presence of a proton gradient across the membrane. The gamma chain is believed to be important in regulating ATPase activity and the flow of protons through the CF(0) complex. The protein is ATP synthase gamma chain of Pectobacterium carotovorum subsp. carotovorum (strain PC1).